We begin with the raw amino-acid sequence, 656 residues long: tRNA(Met) cytidine acetyltransferase TmcA (656 aa).

ATP-binding positions include Gln-145, 167-176, and Arg-291; that span reads GRGKSALLGM. In terms of domain architecture, N-acetyltransferase spans 368 to 542; sequence SEGKYNRQFF…SGCYSAIALK (175 aa). Acetyl-CoA is bound by residues 474–476, 481–487, and Glu-510; these read IAV and QQKGIGQ.

The protein belongs to the RNA cytidine acetyltransferase family. TmcA subfamily.

Its subcellular location is the cytoplasm. It carries out the reaction cytidine(34) in elongator tRNA(Met) + acetyl-CoA + ATP + H2O = N(4)-acetylcytidine(34) in elongator tRNA(Met) + ADP + phosphate + CoA + H(+). Its function is as follows. Catalyzes the formation of N(4)-acetylcytidine (ac(4)C) at the wobble position of tRNA(Met), by using acetyl-CoA as an acetyl donor and ATP (or GTP). The polypeptide is tRNA(Met) cytidine acetyltransferase TmcA (Haemophilus influenzae (strain ATCC 51907 / DSM 11121 / KW20 / Rd)).